We begin with the raw amino-acid sequence, 198 residues long: MSNVRVSNGSPSLERMDARQAEYPKPSACRNLFGPVNHEELTRDLEKHCRDMEEASQRKWNFDFQNHKPLEGKYEWQEVEKGSLPEFYYRPPRPPKGACKVPAQESQDVSGNRQAVPLIGSQANTEDTHLVDQKTDTSDNQTGLAEQCPGIRKRPATDDSSPQNKRANRTEENVSDGSPNAGSVEQTPKKPGLRRRQT.

Residues 1-11 (MSNVRVSNGSP) show a composition bias toward polar residues. Residues 1–22 (MSNVRVSNGSPSLERMDARQAE) form a disordered region. Ser-10 is modified (phosphoserine; by UHMK1). The segment at 51–91 (DMEEASQRKWNFDFQNHKPLEGKYEWQEVEKGSLPEFYYRP) is interaction with CDK2. Tyr-74 is modified (phosphotyrosine; by SRC). The tract at residues 87-198 (FYYRPPRPPK…KKPGLRRRQT (112 aa)) is disordered. At Tyr-88 the chain carries Phosphotyrosine; by ABL, LYN and SRC. A Phosphotyrosine modification is found at Tyr-89. Over residues 104-113 (QESQDVSGNR) the composition is skewed to polar residues. The span at 126–137 (EDTHLVDQKTDT) shows a compositional bias: basic and acidic residues. Residues 153 to 169 (KRPATDDSSPQNKRANR) carry the Nuclear localization signal motif. Thr-157 carries the post-translational modification Phosphothreonine; by CaMK1, PKB/AKT1 and PIM1. A Phosphothreonine modification is found at Thr-170. Positions 175–186 (SDGSPNAGSVEQ) are enriched in polar residues. Thr-187 carries the phosphothreonine; by PKB/AKT1, CDK1 and CDK2 modification. Thr-198 is subject to Phosphothreonine; by CaMK1, PKB/AKT1, RPS6KA1, RPS6KA3 and PIM1.

Belongs to the CDI family. In terms of assembly, forms a ternary complex composed of CCNE1, CDK2 and CDKN1B. Interacts directly with CCNE1; the interaction is inhibited by CDK2-dependent phosphorylation on Thr-187. Interacts with COPS5, subunit of the COP9 signalosome complex; the interaction leads to CDKN1B degradation. Interacts with NUP50; the interaction leads to nuclear import and degradation of phosphorylated CDKN1B. Interacts with CCND1 and SNX6. Interacts (Thr-198-phosphorylated form) with 14-3-3 proteins, binds strongly YWHAQ, weakly YWHAE and YWHAH, but not YWHAB nor YWHAZ; the interaction with YWHAQ results in translocation to the cytoplasm. Interacts with AKT1 and LYN; the interactions lead to cytoplasmic mislocation, phosphorylation of CDKN1B and inhibition of cell cycle arrest. Forms a ternary complex with CCNA2 and CDK2; CDKN1B inhibits the kinase activity of CDK2 through conformational rearrangements. Interacts (unphosphorylated form) with CDK2. Forms a complex with CDK2 and SPDYA, but does not directly interact with SPDYA. Forms a ternary complex composed of cyclin D, CDK4 and CDKN1B. Interacts (phosphorylated on Tyr-88 and Tyr-89) with CDK4; the interaction is required for cyclin D and CDK4 complex assembly, induces nuclear translocation and activates the CDK4 kinase activity. Interacts with GRB2. Interacts with PIM1. Identified in a complex with SKP1, SKP2 and CKS1B. Interacts with UHMK1; the interaction leads to cytoplasmic mislocation, phosphorylation of CDKN1B and inhibition of cell cycle arrest. Also interacts with CDK1. Dephosphorylated on Thr-187 by PPM1H, leading to CDKN1B stability. In terms of processing, phosphorylated; phosphorylation occurs on serine, threonine and tyrosine residues. Phosphorylation on Ser-10 is the major site of phosphorylation in resting cells, takes place at the G(0)-G(1) phase and leads to protein stability. Phosphorylation on other sites is greatly enhanced by mitogens, growth factors, cMYC and in certain cancer cell lines. The phosphorylated form found in the cytoplasm is inactivate. Phosphorylation on Thr-198 is required for interaction with 14-3-3 proteins. Phosphorylation on Thr-187, by CDK1 and CDK2 leads to protein ubiquitination and proteasomal degradation. Tyrosine phosphorylation promotes this process. Phosphorylation by PKB/AKT1 can be suppressed by LY294002, an inhibitor of the catalytic subunit of PI3K. Phosphorylation on Tyr-88 and Tyr-89 has no effect on binding CDK2, but is required for binding CDK4. Dephosphorylated on tyrosine residues by G-CSF. Dephosphorylated on Thr-187 by PPM1H, leading to CDKN1B stability. Ubiquitinated; in the cytoplasm by the KPC complex (composed of RNF123/KPC1 and UBAC1/KPC2) and, in the nucleus, by SCF(SKP2). The latter requires prior phosphorylation on Thr-187. Ubiquitinated; by a TRIM21-containing SCF(SKP2)-like complex; leads to its degradation. Post-translationally, subject to degradation in the lysosome. Interaction with SNX6 promotes lysosomal degradation.

The protein resides in the nucleus. Its subcellular location is the cytoplasm. It is found in the endosome. Its function is as follows. Important regulator of cell cycle progression. Inhibits the kinase activity of CDK2 bound to cyclin A, but has little inhibitory activity on CDK2 bound to SPDYA. Involved in G1 arrest. Potent inhibitor of cyclin E- and cyclin A-CDK2 complexes. Forms a complex with cyclin type D-CDK4 complexes and is involved in the assembly, stability, and modulation of CCND1-CDK4 complex activation. Acts either as an inhibitor or an activator of cyclin type D-CDK4 complexes depending on its phosphorylation state and/or stoichometry. The polypeptide is Cyclin-dependent kinase inhibitor 1B (CDKN1B) (Felis catus (Cat)).